A 403-amino-acid polypeptide reads, in one-letter code: Leu/Ile/Val-binding protein homolog 8 (403 aa).

Residues M1 to A26 form the signal peptide.

Belongs to the leucine-binding protein family.

Component of an amino-acid transport system. In Brucella melitensis biotype 1 (strain ATCC 23456 / CCUG 17765 / NCTC 10094 / 16M), this protein is Leu/Ile/Val-binding protein homolog 8.